A 269-amino-acid chain; its full sequence is Hydroxyethylthiazole kinase (269 aa).

Met45 is a binding site for substrate. ATP-binding residues include Arg121 and Thr167. Gly194 contacts substrate.

The protein belongs to the Thz kinase family. It depends on Mg(2+) as a cofactor.

The enzyme catalyses 5-(2-hydroxyethyl)-4-methylthiazole + ATP = 4-methyl-5-(2-phosphooxyethyl)-thiazole + ADP + H(+). The protein operates within cofactor biosynthesis; thiamine diphosphate biosynthesis; 4-methyl-5-(2-phosphoethyl)-thiazole from 5-(2-hydroxyethyl)-4-methylthiazole: step 1/1. Its function is as follows. Catalyzes the phosphorylation of the hydroxyl group of 4-methyl-5-beta-hydroxyethylthiazole (THZ). The protein is Hydroxyethylthiazole kinase of Geobacillus sp. (strain WCH70).